Here is a 1295-residue protein sequence, read N- to C-terminus: Phosphoribosylformylglycinamidine synthase (1295 aa).

ATP-binding positions include 305-316, 384-386, and A676; these read GAATGSGGEIRD and TGY. Mg(2+)-binding residues include D677, E716, N720, and D884. S886 is a binding site for ATP. Positions 1042-1295 constitute a Glutamine amidotransferase type-1 domain; it reads VAILREQGVN…MFRNARKHLG (254 aa). Residue C1135 is the Nucleophile of the active site. Active-site residues include H1260 and E1262.

This sequence in the N-terminal section; belongs to the FGAMS family. As to quaternary structure, monomer.

The protein resides in the cytoplasm. It carries out the reaction N(2)-formyl-N(1)-(5-phospho-beta-D-ribosyl)glycinamide + L-glutamine + ATP + H2O = 2-formamido-N(1)-(5-O-phospho-beta-D-ribosyl)acetamidine + L-glutamate + ADP + phosphate + H(+). Its pathway is purine metabolism; IMP biosynthesis via de novo pathway; 5-amino-1-(5-phospho-D-ribosyl)imidazole from N(2)-formyl-N(1)-(5-phospho-D-ribosyl)glycinamide: step 1/2. Phosphoribosylformylglycinamidine synthase involved in the purines biosynthetic pathway. Catalyzes the ATP-dependent conversion of formylglycinamide ribonucleotide (FGAR) and glutamine to yield formylglycinamidine ribonucleotide (FGAM) and glutamate. The polypeptide is Phosphoribosylformylglycinamidine synthase (Idiomarina loihiensis (strain ATCC BAA-735 / DSM 15497 / L2-TR)).